The primary structure comprises 352 residues: S-adenosylmethionine:tRNA ribosyltransferase-isomerase (352 aa).

Belongs to the QueA family. In terms of assembly, monomer.

Its subcellular location is the cytoplasm. It carries out the reaction 7-aminomethyl-7-carbaguanosine(34) in tRNA + S-adenosyl-L-methionine = epoxyqueuosine(34) in tRNA + adenine + L-methionine + 2 H(+). It functions in the pathway tRNA modification; tRNA-queuosine biosynthesis. In terms of biological role, transfers and isomerizes the ribose moiety from AdoMet to the 7-aminomethyl group of 7-deazaguanine (preQ1-tRNA) to give epoxyqueuosine (oQ-tRNA). This chain is S-adenosylmethionine:tRNA ribosyltransferase-isomerase, found in Allorhizobium ampelinum (strain ATCC BAA-846 / DSM 112012 / S4) (Agrobacterium vitis (strain S4)).